We begin with the raw amino-acid sequence, 417 residues long: Serine hydroxymethyltransferase (417 aa).

(6S)-5,6,7,8-tetrahydrofolate-binding positions include Leu112 and 116–118; that span reads GHL. Lys221 carries the post-translational modification N6-(pyridoxal phosphate)lysine. Residue Glu247 coordinates (6S)-5,6,7,8-tetrahydrofolate.

This sequence belongs to the SHMT family. In terms of assembly, homodimer. It depends on pyridoxal 5'-phosphate as a cofactor.

The protein localises to the cytoplasm. It catalyses the reaction (6R)-5,10-methylene-5,6,7,8-tetrahydrofolate + glycine + H2O = (6S)-5,6,7,8-tetrahydrofolate + L-serine. The protein operates within one-carbon metabolism; tetrahydrofolate interconversion. Its pathway is amino-acid biosynthesis; glycine biosynthesis; glycine from L-serine: step 1/1. Its function is as follows. Catalyzes the reversible interconversion of serine and glycine with tetrahydrofolate (THF) serving as the one-carbon carrier. This reaction serves as the major source of one-carbon groups required for the biosynthesis of purines, thymidylate, methionine, and other important biomolecules. Also exhibits THF-independent aldolase activity toward beta-hydroxyamino acids, producing glycine and aldehydes, via a retro-aldol mechanism. The protein is Serine hydroxymethyltransferase of Borrelia duttonii (strain Ly).